The sequence spans 881 residues: DNA mismatch repair protein MutS (881 aa).

605–612 contributes to the ATP binding site; the sequence is GPNMSGKS.

It belongs to the DNA mismatch repair MutS family.

In terms of biological role, this protein is involved in the repair of mismatches in DNA. It is possible that it carries out the mismatch recognition step. This protein has a weak ATPase activity. This is DNA mismatch repair protein MutS from Limosilactobacillus reuteri subsp. reuteri (strain JCM 1112) (Lactobacillus reuteri).